The primary structure comprises 180 residues: Cell wall / vacuolar inhibitor of fructosidase 2 (180 aa).

Positions 1–23 (MASSLIFLLLVTLTFSASTLISA) are cleaved as a signal peptide. N-linked (GlcNAc...) asparagine glycosylation occurs at Asn26. Cys35 and Cys44 form a disulfide bridge. 2 N-linked (GlcNAc...) asparagine glycosylation sites follow: Asn73 and Asn84. The cysteines at positions 101 and 141 are disulfide-linked.

It belongs to the PMEI family. Mostly expressed at low levels in seedlings, stems, leaves and flowers (in all organs), and, to a lower extent, in roots and siliques.

It is found in the vacuole. Functionally, inhibits fructosidases from both cell wall (cell wall invertase CWI) and vacuoles (vacuolar invertase VI). The polypeptide is Cell wall / vacuolar inhibitor of fructosidase 2 (C/VIF2) (Arabidopsis thaliana (Mouse-ear cress)).